The primary structure comprises 277 residues: Cis-2,3-dihydrobiphenyl-2,3-diol dehydrogenase (277 aa).

9–33 serves as a coordination point for NAD(+); sequence LITGGASGLGRALVDRFVAERAKVA. Ser-142 serves as a coordination point for substrate. Catalysis depends on Tyr-155, which acts as the Proton acceptor.

The protein belongs to the short-chain dehydrogenases/reductases (SDR) family. As to quaternary structure, homotetramer.

The enzyme catalyses (2R,3S)-3-phenylcyclohexa-3,5-diene-1,2-diol + NAD(+) = biphenyl-2,3-diol + NADH + H(+). It participates in xenobiotic degradation; biphenyl degradation; 2-hydroxy-2,4-pentadienoate and benzoate from biphenyl: step 2/4. This chain is Cis-2,3-dihydrobiphenyl-2,3-diol dehydrogenase (bphB), found in Pseudomonas putida (Arthrobacter siderocapsulatus).